The primary structure comprises 317 residues: MRVQGSQRRLLGSLNSTPTATPHLGLAANQTGARCLEVSIPDGLFLSLGLVSLVENVLVVTAIAKNRNLHSPMYCFICCLALSDLLVSGSNMLETAVTLLLEAGALAARAAVVQQLDNVIDVITCSSMLSSLCFLGAIAVDRYISIFYALRYHSIVTLPRARRAIAAIWVASVLCSTLFIAYYDHAAVLLCLVVFFLAMLVLMAVLYVHMLARACQHAQGIARLHKRQRLAHQGFGLKGAATLTILLGIFFLCWGPFFLHLTLIVLCPQHPTCSCIFKNFNLFLALIICNAIIDPLIYAFRSQELRRTLKEVLLCSW.

Residues 1-37 (MRVQGSQRRLLGSLNSTPTATPHLGLAANQTGARCLE) are Extracellular-facing. N-linked (GlcNAc...) asparagine glycosylation is present at Asn-29. Residues 38–63 (VSIPDGLFLSLGLVSLVENVLVVTAI) form a helical membrane-spanning segment. The Cytoplasmic segment spans residues 64 to 72 (AKNRNLHSP). The helical transmembrane segment at 73-93 (MYCFICCLALSDLLVSGSNML) threads the bilayer. At 94–118 (ETAVTLLLEAGALAARAAVVQQLDN) the chain is on the extracellular side. A helical membrane pass occupies residues 119–140 (VIDVITCSSMLSSLCFLGAIAV). At 141 to 163 (DRYISIFYALRYHSIVTLPRARR) the chain is on the cytoplasmic side. The helical transmembrane segment at 164–183 (AIAAIWVASVLCSTLFIAYY) threads the bilayer. Residues 184–191 (DHAAVLLC) lie on the Extracellular side of the membrane. Residues 192–211 (LVVFFLAMLVLMAVLYVHML) traverse the membrane as a helical segment. Topologically, residues 212–240 (ARACQHAQGIARLHKRQRLAHQGFGLKGA) are cytoplasmic. A helical membrane pass occupies residues 241–266 (ATLTILLGIFFLCWGPFFLHLTLIVL). Over 267-279 (CPQHPTCSCIFKN) the chain is Extracellular. The chain crosses the membrane as a helical span at residues 280–300 (FNLFLALIICNAIIDPLIYAF). Topologically, residues 301–317 (RSQELRRTLKEVLLCSW) are cytoplasmic. Cys-315 carries S-palmitoyl cysteine lipidation.

This sequence belongs to the G-protein coupled receptor 1 family. In terms of assembly, interacts with MGRN1, but does not undergo MGRN1-mediated ubiquitination; this interaction competes with GNAS-binding and thus inhibits agonist-induced cAMP production. Interacts with OPN3; the interaction results in a decrease in MC1R-mediated cAMP signaling and ultimately a decrease in melanin production in melanocytes.

It is found in the cell membrane. Functionally, receptor for MSH (alpha, beta and gamma) and ACTH. The activity of this receptor is mediated by G proteins which activate adenylate cyclase. Mediates melanogenesis, the production of eumelanin (black/brown) and phaeomelanin (red/yellow), via regulation of cAMP signaling in melanocytes. In Macaca nigra (Celebes black macaque), this protein is Melanocyte-stimulating hormone receptor (MC1R).